Here is a 513-residue protein sequence, read N- to C-terminus: Nitrate transporter 2.2 (513 aa).

12 helical membrane passes run 38 to 58 (WICF…APVI), 74 to 94 (VSAV…VDVV), 98 to 118 (YGAA…ALVT), 128 to 148 (FFIG…GTMF), 158 to 178 (AIAA…MPLI), 196 to 216 (AFFV…LLGI), 247 to 265 (LGNY…SFGV), 281 to 301 (FGLN…MNIF), 323 to 343 (LWVL…MGKV), 351 to 371 (IVIM…HFGI), 383 to 403 (VSGL…AIWF), and 419 to 439 (FVWM…IWFP).

The protein belongs to the major facilitator superfamily. Nitrate/nitrite porter (TC 2.A.1.8) family.

It localises to the cell membrane. In terms of biological role, involved in nitrate transport, but does not seem to be able to mediate transport by its own. Acts as a dual component transporter with NAR2 (system 2). Involved in a high affinity transport specific for nitrate. This is Nitrate transporter 2.2 from Chlamydomonas reinhardtii (Chlamydomonas smithii).